We begin with the raw amino-acid sequence, 135 residues long: ATP synthase epsilon chain (135 aa).

Belongs to the ATPase epsilon chain family. As to quaternary structure, F-type ATPases have 2 components, CF(1) - the catalytic core - and CF(0) - the membrane proton channel. CF(1) has five subunits: alpha(3), beta(3), gamma(1), delta(1), epsilon(1). CF(0) has three main subunits: a, b and c.

It localises to the cell inner membrane. Produces ATP from ADP in the presence of a proton gradient across the membrane. In Rhodopseudomonas palustris (strain HaA2), this protein is ATP synthase epsilon chain.